A 481-amino-acid chain; its full sequence is 2-succinylbenzoate--CoA ligase (481 aa).

It belongs to the ATP-dependent AMP-binding enzyme family. MenE subfamily.

The catalysed reaction is 2-succinylbenzoate + ATP + CoA = 2-succinylbenzoyl-CoA + AMP + diphosphate. The protein operates within quinol/quinone metabolism; 1,4-dihydroxy-2-naphthoate biosynthesis; 1,4-dihydroxy-2-naphthoate from chorismate: step 5/7. It functions in the pathway quinol/quinone metabolism; menaquinone biosynthesis. Functionally, converts 2-succinylbenzoate (OSB) to 2-succinylbenzoyl-CoA (OSB-CoA). In Bacillus cereus (strain Q1), this protein is 2-succinylbenzoate--CoA ligase.